The chain runs to 279 residues: Thymidylate synthase (279 aa).

133–134 is a binding site for dUMP; the sequence is RR. Cys-154 (nucleophile) is an active-site residue. DUMP-binding positions include 178 to 181, Asn-189, and 219 to 221; these read RSND and HIY. Asp-181 contacts (6R)-5,10-methylene-5,6,7,8-tetrahydrofolate. (6R)-5,10-methylene-5,6,7,8-tetrahydrofolate is bound at residue Ala-278.

It belongs to the thymidylate synthase family. Bacterial-type ThyA subfamily. Homodimer.

It is found in the cytoplasm. The enzyme catalyses dUMP + (6R)-5,10-methylene-5,6,7,8-tetrahydrofolate = 7,8-dihydrofolate + dTMP. The protein operates within pyrimidine metabolism; dTTP biosynthesis. In terms of biological role, catalyzes the reductive methylation of 2'-deoxyuridine-5'-monophosphate (dUMP) to 2'-deoxythymidine-5'-monophosphate (dTMP) while utilizing 5,10-methylenetetrahydrofolate (mTHF) as the methyl donor and reductant in the reaction, yielding dihydrofolate (DHF) as a by-product. This enzymatic reaction provides an intracellular de novo source of dTMP, an essential precursor for DNA biosynthesis. The polypeptide is Thymidylate synthase (Streptococcus pyogenes serotype M6 (strain ATCC BAA-946 / MGAS10394)).